A 275-amino-acid chain; its full sequence is NAC domain-containing protein 2 (275 aa).

Residues 10 to 162 (LPPGFRFHPT…DWVLCRIYKK (153 aa)) form the NAC domain. The DNA-binding element occupies 107 to 168 (VGIKKALVFY…IYKKKNLERA (62 aa)).

In terms of tissue distribution, expressed in roots, stem, flowers, and leaves.

It is found in the nucleus. In terms of biological role, transcription factor that binds DNA motifs 5'-CGT[AG](5N)NACG[ACT][AC][AT][ACG][ACT]-3' and 5'-CACG[ACT][AC][AT][AGT][CT]-3' in target genes promoters. Promotes leaf senescence (developmental, light-induced and ABA-induced senescence) and regulates fruit yield and sugar content, probably by establishing abscisic acid (ABA) homeostasis. Activates the expression of senescence and ABA associated genes including NCED1, ABCG40, CYP707A2, SAG113, SGR1 and PAO, by directly binding to their promoters. The polypeptide is NAC domain-containing protein 2 (Solanum lycopersicum (Tomato)).